The following is a 458-amino-acid chain: Flavohemoprotein (458 aa).

In terms of domain architecture, Globin spans 2–158 (TLSEDTLRAV…LADLFIKREE (157 aa)). Histidine 107 is a heme b binding site. Active-site charge relay system residues include tyrosine 117 and glutamate 157. The tract at residues 169–457 (GGWRQTRTFR…FEMFGPFKAS (289 aa)) is reductase. The region spanning 172 to 279 (RQTRTFRVEE…APPYGDFFLR (108 aa)) is the FAD-binding FR-type domain. Residues tyrosine 211 and 228-231 (RQYS) each bind FAD. An NADP(+)-binding site is contributed by 321 to 326 (GIGQTP). Residue 450–453 (MFGP) participates in FAD binding.

The protein belongs to the globin family. Two-domain flavohemoproteins subfamily. In the C-terminal section; belongs to the flavoprotein pyridine nucleotide cytochrome reductase family. In terms of assembly, monomer. The cofactor is heme b. Requires FAD as cofactor.

It catalyses the reaction 2 nitric oxide + NADPH + 2 O2 = 2 nitrate + NADP(+) + H(+). The enzyme catalyses 2 nitric oxide + NADH + 2 O2 = 2 nitrate + NAD(+) + H(+). In terms of biological role, flavohemoprotein involved in nitric oxide (NO) detoxification in an aerobic process, termed nitric oxide dioxygenase (NOD) reaction that utilizes O(2) and NAD(P)H to convert NO to nitrate, which protects the protozoan parasite from various noxious nitrogen compounds. Therefore, plays a central role in the inducible response to nitrosative stress. May also be involved in O(2) detoxification. This Giardia intestinalis (strain ATCC 50803 / WB clone C6) (Giardia lamblia) protein is Flavohemoprotein (hmpA).